We begin with the raw amino-acid sequence, 741 residues long: MEQTYQYAWIIPFLPLPVPMLIGLGLLLFPTATKSLRRMWAFQSVLLLSIVMIFSINLSIQQINSSSVYQYVWSWIINNDFSLEFGYLIDPLTSIMSILITTVGILVLIYSDNYMSHDHGYLRFFAYMSFFSTSMLGLVTSSNLIQIYIFWELVGMCSYLLIGFWFTRPVAAKACQKAFVTNRVGDFGLLLGILGFYWITGSFEFRDLFQIFNNLISNNEVNFFFVTLCAVLLFGGAIAKSAQFPLHVWLPDAMEGPTPISALIRAATMVAAGIFLVARLMPLFIVIPHIMNFISLIGIITVFLGATLALAQKDIKRGLAYSTMSQLGYMMLALGMGSYRSALFHLITHAYSKALLFLGSGSVIHSMETLVGYCPEKSQNMVLMGGLTKHVPITKNSFLLGTLSLCGIPPLACFWSKDEILNDSWLYSPIFATIAWSTAGLTAFYMCRIYLLTFEGHLNVHFQNYSGKMNTPLYSISLWGKEGSKISNKNFPLVTLLKMKKNERTYFFSNKVYKIDENVRNQIQPFLSIPNFGNTKTSLYPYESDNTMLFPILILIIFTLFVGFLGIHFNQDVDILTKWLTPSINLLHKNSNNSIDWYEFSKDAVFSVSIASFGIFIAFFLYKPVYSSFQNLDLINSFVKISPKRIFYDKIKNAIYDWSYNRGYIDAFYGTFLTAGMRKLAEFTHFFDRRIIDGIPNGVGLMSFFVAEVIKSVGGGRISSYLFFYFSYVSIFLLIYYFVNL.

A run of 16 helical transmembrane segments spans residues 9–29 (WIIP…LLLF), 40–60 (WAFQ…NLSI), 89–109 (IDPL…LVLI), 125–145 (FAYM…SNLI), 147–167 (IYIF…FWFT), 185–205 (GDFG…SFEF), 219–239 (NEVN…GAIA), 258–278 (TPIS…FLVA), 283–303 (LFIV…ITVF), 327–347 (LGYM…FHLI), 354–374 (ALLF…VGYC), 396–416 (NSFL…CFWS), 425–445 (WLYS…TAFY), 549–569 (LFPI…GIHF), 605–625 (VFSV…YKPV), and 721–741 (YLFF…FVNL).

Belongs to the complex I subunit 5 family. NDH is composed of at least 16 different subunits, 5 of which are encoded in the nucleus.

It is found in the plastid. It localises to the chloroplast thylakoid membrane. It catalyses the reaction a plastoquinone + NADH + (n+1) H(+)(in) = a plastoquinol + NAD(+) + n H(+)(out). It carries out the reaction a plastoquinone + NADPH + (n+1) H(+)(in) = a plastoquinol + NADP(+) + n H(+)(out). Its function is as follows. NDH shuttles electrons from NAD(P)H:plastoquinone, via FMN and iron-sulfur (Fe-S) centers, to quinones in the photosynthetic chain and possibly in a chloroplast respiratory chain. The immediate electron acceptor for the enzyme in this species is believed to be plastoquinone. Couples the redox reaction to proton translocation, and thus conserves the redox energy in a proton gradient. The polypeptide is NAD(P)H-quinone oxidoreductase subunit 5, chloroplastic (ndhF) (Pentatrichia integra (Rock-climbing daisy)).